Here is a 2551-residue protein sequence, read N- to C-terminus: Probable polyketide synthase 13 (2551 aa).

Positions 10–434 (ENDVAIIGIG…GSNCCLILSQ (425 aa)) constitute a Ketosynthase family 3 (KS3) domain. Active-site for beta-ketoacyl synthase activity residues include cysteine 176, histidine 317, and histidine 358. The tract at residues 621–654 (GIEVSFIIGHSLGEIPAAYCSGMINIDTLCYLIY) is acyl/malonyl transferase. Serine 631 serves as the catalytic For acyl/malonyl transferase activity. The interval 928-1057 (TDNLGYLNEN…GDFQLSNHSS (130 aa)) is N-terminal hotdog fold. The PKS/mFAS DH domain occupies 928–1226 (TDNLGYLNEN…CTSLTPIKES (299 aa)). Histidine 961 functions as the Proton acceptor; for dehydratase activity in the catalytic mechanism. The C-terminal hotdog fold stretch occupies residues 1076–1226 (NLTKLSRDEL…CTSLTPIKES (151 aa)). The Proton donor; for dehydratase activity role is filled by aspartate 1136. Residues 2465 to 2542 (DCQTIIKDSF…SSIQYTINSF (78 aa)) form the Carrier domain. At serine 2502 the chain carries O-(pantetheine 4'-phosphoryl)serine.

Pantetheine 4'-phosphate serves as cofactor.

Probable polyketide synthase. This is Probable polyketide synthase 13 (pks13) from Dictyostelium discoideum (Social amoeba).